The primary structure comprises 152 residues: Large ribosomal subunit protein bL9 (152 aa).

It belongs to the bacterial ribosomal protein bL9 family.

Its function is as follows. Binds to the 23S rRNA. The polypeptide is Large ribosomal subunit protein bL9 (Gloeothece citriformis (strain PCC 7424) (Cyanothece sp. (strain PCC 7424))).